Consider the following 235-residue polypeptide: Carboxymethylenebutenolidase 2 (235 aa).

Catalysis depends on residues cysteine 117, aspartate 173, and histidine 204.

This sequence belongs to the dienelactone hydrolase family. As to quaternary structure, monomer.

It catalyses the reaction 2-(5-oxo-2,5-dihydrofuran-2-ylidene)acetate + H2O = 4-oxohex-2-enedioate + H(+). It participates in aromatic compound metabolism; 3-chlorocatechol degradation. Its function is as follows. Ring cleavage of cyclic ester dienelactone to produce maleylacetate. The chain is Carboxymethylenebutenolidase 2 (tfdEII) from Cupriavidus pinatubonensis (strain JMP 134 / LMG 1197) (Cupriavidus necator (strain JMP 134)).